A 415-amino-acid chain; its full sequence is Peptide chain release factor subunit 1 (415 aa).

This sequence belongs to the eukaryotic release factor 1 family. Heterodimer of two subunits, one of which binds GTP.

It localises to the cytoplasm. Functionally, directs the termination of nascent peptide synthesis (translation) in response to the termination codons UAA, UAG and UGA. The protein is Peptide chain release factor subunit 1 of Thermococcus kodakarensis (strain ATCC BAA-918 / JCM 12380 / KOD1) (Pyrococcus kodakaraensis (strain KOD1)).